A 351-amino-acid polypeptide reads, in one-letter code: Peptide chain release factor 1 (351 aa).

Position 233 is an N5-methylglutamine (Q233).

It belongs to the prokaryotic/mitochondrial release factor family. In terms of processing, methylated by PrmC. Methylation increases the termination efficiency of RF1.

Its subcellular location is the cytoplasm. In terms of biological role, peptide chain release factor 1 directs the termination of translation in response to the peptide chain termination codons UAG and UAA. The chain is Peptide chain release factor 1 (prfA) from Treponema pallidum (strain Nichols).